We begin with the raw amino-acid sequence, 92 residues long: MTKRTKKVGITGKFGVRYGSSLRRQTKKLEVQQHAKYDCSFCGKRTVQRGATGIWNCKSCKKTVAGGAYTVSTAAAATVRSTIRRLRELAEA.

Cysteine 39, cysteine 42, cysteine 57, and cysteine 60 together coordinate Zn(2+).

Belongs to the eukaryotic ribosomal protein eL43 family. As to quaternary structure, component of the large ribosomal subunit. Mature ribosomes consist of a small (40S) and a large (60S) subunit. The 40S subunit contains 32 different proteins and 1 molecule of RNA (18S). The 60S subunit contains 45 different proteins and 3 molecules of RNA (25S, 5.8S and 5S). Requires Zn(2+) as cofactor.

The protein localises to the cytoplasm. Functionally, component of the ribosome, a large ribonucleoprotein complex responsible for the synthesis of proteins in the cell. The small ribosomal subunit (SSU) binds messenger RNAs (mRNAs) and translates the encoded message by selecting cognate aminoacyl-transfer RNA (tRNA) molecules. The large subunit (LSU) contains the ribosomal catalytic site termed the peptidyl transferase center (PTC), which catalyzes the formation of peptide bonds, thereby polymerizing the amino acids delivered by tRNAs into a polypeptide chain. The nascent polypeptides leave the ribosome through a tunnel in the LSU and interact with protein factors that function in enzymatic processing, targeting, and the membrane insertion of nascent chains at the exit of the ribosomal tunnel. This Candida albicans (strain SC5314 / ATCC MYA-2876) (Yeast) protein is Large ribosomal subunit protein eL43.